A 107-amino-acid polypeptide reads, in one-letter code: Ig kappa chain V region 4135 (107 aa).

The framework-1 stretch occupies residues 1–24; it reads ADIVMTQTPASVSEPVGGTVTIKC. The segment at 25–35 is complementarity-determining-1; sequence QTSQSIDDYLS. Positions 36-50 are framework-2; it reads WYQQKPGQPPKGLIY. The complementarity-determining-2 stretch occupies residues 51 to 57; the sequence is RASTLAS. Positions 58–89 are framework-3; sequence GVPSRFRGSGSGTDFTLTISDLECADAATYYC. Positions 90-96 are complementarity-determining-3; the sequence is QSTYGVG. Positions 97–106 are framework-4; the sequence is FGGGTEVVVK.

This is Ig kappa chain V region 4135 from Oryctolagus cuniculus (Rabbit).